A 527-amino-acid polypeptide reads, in one-letter code: Peptide chain release factor 3 (527 aa).

The tr-type G domain maps to 9–277 (AKRRTFAIIS…AVVNWAPMPL (269 aa)). Residues 18-25 (SHPDAGKT), 86-90 (DTPGH), and 140-143 (NKLD) each bind GTP.

Belongs to the TRAFAC class translation factor GTPase superfamily. Classic translation factor GTPase family. PrfC subfamily.

Its subcellular location is the cytoplasm. Functionally, increases the formation of ribosomal termination complexes and stimulates activities of RF-1 and RF-2. It binds guanine nucleotides and has strong preference for UGA stop codons. It may interact directly with the ribosome. The stimulation of RF-1 and RF-2 is significantly reduced by GTP and GDP, but not by GMP. The protein is Peptide chain release factor 3 of Pseudomonas syringae pv. tomato (strain ATCC BAA-871 / DC3000).